The following is a 1124-amino-acid chain: MFYGSSSASMSLPSKNRLKRQSRTFTQVLYRTLSYRDRRSVTDLPEQVRDDPAELSTQSSAPGVLKIFGDEISAGANYKSVLATPRSSAQELIKEALERYSLNKTSACNFVLCDVIGRFEGPDRRWRTECLRALGNNEKPLLLQDLWKPKEGFSRRFELRRRAEVEELAAKEKDTVTADINAQARKLQRNRAKGTMTLQHGSSFCRSLSETSLNLVGLPGEEPKRYYSTLPGPIRTRSARDSEIRKERDGGGVKHSLYQSPHLLLLQGYNQQDCLVYLLNREQHTVGQETASARPNICLSSPDVLPLHCRIRRAAQRRSSSDQRLLLEPVAHGNVLVNFMRIERPTPIRHGDLLSFGAHYIFLYKDPLSAKPLPAQTLTRLRTLAKLCDGESGGLPEKGDACRMCGAVLHEPAASSRRSSKAPARGSQKRKLALEFERAHEDALVNRVLTLIEPSGDDHKLTPAYLLCLCIKHSANTFPPGSFGKLLQKIAKRIQTIAWEKTKELAQKQAQHQDPASLSLLSISDLVPDLQFIFFWMSNAIEILYFIQQKSPAYMQTIELMDDKAGSKESLLSATISANEEAMTILEEVIMYTFQQCVYYITKTLYVVLPGLLDCNPFGTEPSSEQCRRAAGVCVCAVCVMPEAVRRVVSVFQTTSDLLQQYQVHSEIQSQMFAYLFFFTNVSLFNQLIDKGPARGWFQRSRVLQIQASVKILLDWAKGAGHNHLAQKFFAKFCSTVTILASPPQQLSQMSWKALCAEHPSLKPVQLHRILTQYQLMAELGPLPIWQPSSEDEAYIYRTVDLLESFENHPPIVLPSAGFKVDLESDCVEDSIYRQLLYVRHFVWGLRTKTHPSNGCTDRQDAQREPPQPHSSPHPAPSVRGEGEGEVRSSSTTLGGRGEGAGAEDRTRDKPTHGIHYRNGSGARYANQSQATDSSCILTPPNTPLYPEHTYIQSNTAHYPEHASQEHTHTHSHTKTNGCMRSTPEHKKINGFISNGIEGPLSGCGFPFPVPVSHLGPKSDDICSVFVVDLDKGPYGLGMGLIDGLHTPLNSPGIYIRTLIPDGPAAADGRLCIGDRILAVNGTSLIGADYQSAVDLIRLGGGRLRFLVAKSDLEVSEKISASSC.

Residues 61–164 enclose the Ras-associating domain; the sequence is APGVLKIFGD…RRFELRRRAE (104 aa). The interval 226–253 is disordered; that stretch reads YYSTLPGPIRTRSARDSEIRKERDGGGV. A compositionally biased stretch (basic and acidic residues) spans 238-252; it reads SARDSEIRKERDGGG. The 59-residue stretch at 284 to 342 folds into the FHA domain; the sequence is HTVGQETASARPNICLSSPDVLPLHCRIRRAAQRRSSSDQRLLLEPVAHGNVLVNFMRI. In terms of domain architecture, Dilute spans 516 to 809; it reads ASLSLLSISD…VDLLESFENH (294 aa). 2 disordered regions span residues 850-942 and 960-982; these read THPS…TPPN and PEHASQEHTHTHSHTKTNGCMRS. A compositionally biased stretch (pro residues) spans 866–876; it reads PPQPHSSPHPA. Residues 903-912 show a composition bias toward basic and acidic residues; it reads AEDRTRDKPT. Positions 926–937 are enriched in polar residues; the sequence is ANQSQATDSSCI. The span at 960-969 shows a compositional bias: basic and acidic residues; it reads PEHASQEHTH. Positions 1027–1112 constitute a PDZ domain; that stretch reads VVDLDKGPYG…RLRFLVAKSD (86 aa).

Belongs to the RADIL family. Interacts with RAP1A; in a GTP-dependent manner. As to expression, ubiquitously expressed and enriched in the anterior part of the embryos.

Downstream effector of Rap required for cell adhesion and migration of neural crest precursors during development. In Danio rerio (Zebrafish), this protein is Ras-associating and dilute domain-containing protein (radil).